Consider the following 36-residue polypeptide: Photosystem II reaction center protein Psb30 (36 aa).

The chain crosses the membrane as a helical span at residues 8 to 28 (IIAQLTVVTLTLLAGPVIVFL).

Belongs to the Psb30/Ycf12 family. PSII is composed of 1 copy each of membrane proteins PsbA, PsbB, PsbC, PsbD, PsbE, PsbF, PsbH, PsbI, PsbJ, PsbK, PsbL, PsbM, PsbT, PsbX, PsbY, PsbZ, Psb30/Ycf12, peripheral proteins of the oxygen-evolving complex and a large number of cofactors. It forms dimeric complexes.

The protein localises to the plastid. It localises to the cyanelle thylakoid membrane. Functionally, a core subunit of photosystem II (PSII), probably helps stabilize the reaction center. The polypeptide is Photosystem II reaction center protein Psb30 (Cyanophora paradoxa).